A 213-amino-acid polypeptide reads, in one-letter code: Major fimbrial subunit (213 aa).

Residues M1–A20 form the signal peptide. C41 and C81 are disulfide-bonded.

This sequence belongs to the fimbrial protein family.

It localises to the fimbrium. Mediates adherence to oropharyngeal epithelial cells. Helps the airway colonization process. The chain is Major fimbrial subunit (hifA) from Haemophilus influenzae.